The primary structure comprises 416 residues: Major royal jelly protein 8 (416 aa).

The signal sequence occupies residues 1–16 (MIRWLLLMYLGITCQG). N-linked (GlcNAc...) asparagine glycosylation is found at N24, N58, N93, N115, N158, N175, N196, and N215.

Belongs to the major royal jelly protein family. As to expression, expressed at very low levels in the hypopharyngeal glands of worker honey bees (at protein level). Secreted into bee venom in the sting apparatus (at protein level). Expressed in the spermatheca of adult queen bees (at protein level); expression levels are higher in mated queens than in virgin queens. Along with Mrjp9 expressed at very low levels in the head of worker bees compared to other major royal jelly proteins.

The protein resides in the secreted. Component of bee sting venom. Component of royal jelly, a substance produced in the hypopharyngeal gland containing proteins, free amino acids, fatty acids, sugars and other nutrients, which is fed to developing larvae by worker nurse bees; may be present only at trace levels. All larvae are fed some royal jelly (also known as worker jelly) early in their development but it forms the principal source of nutrition for larvae destined to become queen bees. Produced in the spermatheca of adult queen bees, along with other major royal jelly proteins, where it may act as a nutrient supply for sperm stored by mated queens, or be involved in energy metabolism. This is Major royal jelly protein 8 from Apis mellifera (Honeybee).